A 320-amino-acid polypeptide reads, in one-letter code: Putative olfactory receptor 2W5 pseudogene (320 aa).

Residue Asn-5 is glycosylated (N-linked (GlcNAc...) asparagine). Helical transmembrane passes span 30-50 (VILI…LLLV), 58-78 (PMYF…ASIA), 98-118 (VAQL…LVVM), and 140-160 (LCLQ…FIMC). Residues Cys-97 and Cys-179 are joined by a disulfide bond. Positions 267–320 (LPRSGEVPDSLLHHRHSQHQPPHLHFEEQGCEGDHEETSGVGERGWGASTRGTL) are disordered. The segment covering 290 to 304 (LHFEEQGCEGDHEET) has biased composition (basic and acidic residues).

It belongs to the G-protein coupled receptor 1 family.

The protein localises to the cell membrane. Odorant receptor. The chain is Putative olfactory receptor 2W5 pseudogene from Homo sapiens (Human).